We begin with the raw amino-acid sequence, 96 residues long: Small ribosomal subunit protein bS18 (96 aa).

It belongs to the bacterial ribosomal protein bS18 family. As to quaternary structure, part of the 30S ribosomal subunit. Forms a tight heterodimer with protein bS6.

Binds as a heterodimer with protein bS6 to the central domain of the 16S rRNA, where it helps stabilize the platform of the 30S subunit. This Borrelia garinii subsp. bavariensis (strain ATCC BAA-2496 / DSM 23469 / PBi) (Borreliella bavariensis) protein is Small ribosomal subunit protein bS18.